The following is a 317-amino-acid chain: Transcription factor elt-3 (317 aa).

The tract at residues 1–34 (METANYYLPSPPYSSTSSSDSRESRMNTPIPTTY) is disordered. Residues 244 to 268 (CSNCKTRETTLWRRNGEGGVECNAC) form a GATA-type zinc finger. The segment at 290–317 (KRNRRPRNESPNSAIRNTHQRHGHAAAC) is disordered. Positions 307–317 (THQRHGHAAAC) are enriched in basic residues.

As to quaternary structure, interacts with skn-1; interaction may enhance transcriptional activation of target genes. Expressed in head, trunk and tail. Expression decreases with age in the hypodermal cells and the pharyngeal-intestinal valve cells in the head, eventually showing little or no expression in about 14 day old worms. Expressed in hypodermal, but not in intestinal, cells at 1 day of age. Expression in the hypodermal and intestinal cells in the trunk region decreases quickly between day 3 and day 5 of adulthood. Expression in the tail between days 3 and 14 stays approximately uniform.

It is found in the nucleus. Transcription factor. Required, in concert with signal transducer and transcription factor sta-2, for up-regulation of the vacuolar H(+)-ATPase and acceleration of lysosome maturation at molt. Involved in regulating hypodermal development, perhaps acting downstream of transcription factor elt-1. Modulates environmentally induced changes in collagen gene expression, including rol-6, sqt-1, lon-3, and dpy-13. Involved in regulating expression of various genes, including gst-4, sod-3, ugt-9, and col-144. In response to oxidative stress, required to up-regulate expression of gst-4 mRNA. Regulated by the Insulin/IGF-1-like signaling (IIS) mediated pathway. Plays a role in longevity. May regulate the expression of genes that control sensitivity to osmotic stress, in conjunction with the GATA region-binding transcription factor elt-2. May form a transcriptional circuit with GATA factors egl-18 and elt-6. This Caenorhabditis elegans protein is Transcription factor elt-3.